An 81-amino-acid chain; its full sequence is MSHTVKIYDTCIGCTQCVRACPTDVLEMVPWDGCKAAQVASSPRTEDCVGCKRCETACPTDFLSIRVYLGAETTRSMGLAY.

4Fe-4S ferredoxin-type domains follow at residues 2 to 31 and 39 to 68; these read SHTV…MVPW and VASS…IRVY. Cys-11, Cys-14, Cys-17, Cys-21, Cys-48, Cys-51, Cys-54, and Cys-58 together coordinate [4Fe-4S] cluster.

In terms of assembly, the cyanobacterial PSI reaction center is composed of one copy each of PsaA,B,C,D,E,F,I,J,K,L,M and X, and forms trimeric complexes. The cofactor is [4Fe-4S] cluster.

The protein resides in the cellular thylakoid membrane. It carries out the reaction reduced [plastocyanin] + hnu + oxidized [2Fe-2S]-[ferredoxin] = oxidized [plastocyanin] + reduced [2Fe-2S]-[ferredoxin]. Its function is as follows. Apoprotein for the two 4Fe-4S centers FA and FB of photosystem I (PSI); essential for photochemical activity. FB is the terminal electron acceptor of PSI, donating electrons to ferredoxin. The C-terminus interacts with PsaA/B/D and helps assemble the protein into the PSI complex. Required for binding of PsaD and PsaE to PSI. PSI is a plastocyanin/cytochrome c6-ferredoxin oxidoreductase, converting photonic excitation into a charge separation, which transfers an electron from the donor P700 chlorophyll pair to the spectroscopically characterized acceptors A0, A1, FX, FA and FB in turn. The polypeptide is Photosystem I iron-sulfur center (Trichormus variabilis (strain ATCC 29413 / PCC 7937) (Anabaena variabilis)).